The chain runs to 168 residues: MVDEHKAHKAILAYEKGWLAFSLAMLFVFIALIAYTLATHTAGVIPAGKLERVDPTTVRQEGPWADPAQAVVQTGPNQYTVYVLAFAFGYQPNPIEVPQGAEIVFKITSPDVIHGFHVEGTNINVEVLPGEVSTVRYTFKRPGEYRIICNQYCGLGHQNMFGTIVVKE.

Topologically, residues 1–3 (MVD) are cytoplasmic. The chain crosses the membrane as a helical span at residues 4 to 38 (EHKAHKAILAYEKGWLAFSLAMLFVFIALIAYTLA). The Periplasmic portion of the chain corresponds to 39–168 (THTAGVIPAG…NMFGTIVVKE (130 aa)). Cu cation is bound by residues His-114, Cys-149, Cys-153, and His-157.

Belongs to the cytochrome c oxidase subunit 2 family.

Its subcellular location is the cell membrane. The catalysed reaction is 4 Fe(II)-[cytochrome c] + O2 + 8 H(+)(in) = 4 Fe(III)-[cytochrome c] + 2 H2O + 4 H(+)(out). Its function is as follows. Subunits I and II form the functional core of the enzyme complex. Electrons originating in cytochrome c are transferred via heme a and Cu(A) to the binuclear center formed by heme a3 and Cu(B). This chain is Cytochrome c oxidase subunit 2 (cbaB), found in Thermus thermophilus (strain ATCC 27634 / DSM 579 / HB8).